Consider the following 957-residue polypeptide: PE-PGRS family protein PE_PGRS3 (957 aa).

One can recognise a PE domain in the interval 4–94 (VIAAPEVIAA…GAYAAAEAAA (91 aa)). A compositionally biased stretch (basic residues) spans 893–925 (CRRQRRADRQRRQRRQRRQSRGHARCRRHRRAA). Positions 893–957 (CRRQRRADRQ…GISCSPQMMP (65 aa)) are disordered.

The protein belongs to the mycobacterial PE family. PGRS subfamily. In terms of processing, a cleavage of the protein removes the N-terminal 120-150 residues, immediately upstream the PGRS domain. The exact position of the cleavage site could not be identified.

The protein localises to the cell outer membrane. Its subcellular location is the secreted. It localises to the cell wall. It is found in the cell surface. In terms of biological role, the arginine-rich C-terminal region protrudes from the mycobacterial membrane and mediates M.tuberculosis entry into host epithelial cells. May serve as a bridge between mycobacteria and host cells by interacting with specific host phospholipids and extracting them from host cells, for their direct integration or as a source of phosphate, during phases of TB pathogenesis when M.tuberculosis is short of phosphate supply. In Mycobacterium tuberculosis (strain ATCC 25618 / H37Rv), this protein is PE-PGRS family protein PE_PGRS3.